A 252-amino-acid polypeptide reads, in one-letter code: Small ribosomal subunit protein uS2A (252 aa).

At Ser-2 the chain carries N-acetylserine. Residues 209 to 252 (EVEQQAAEETTSTGADAEESKEEVAEGQNEASEWAEENTEAVSW) are disordered. Positions 241–252 (EWAEENTEAVSW) are enriched in acidic residues.

It belongs to the universal ribosomal protein uS2 family. Component of the small ribosomal subunit. Mature ribosomes consist of a small (40S) and a large (60S) subunit. The 40S subunit contains about 33 different proteins and 1 molecule of RNA (18S). The 60S subunit contains about 49 different proteins and 3 molecules of RNA (25S, 5.8S and 5S). Interacts with RPS21.

Its subcellular location is the cytoplasm. In terms of biological role, required for the assembly and/or stability of the 40S ribosomal subunit. Required for the processing of the 20S rRNA-precursor to mature 18S rRNA in a late step of the maturation of 40S ribosomal subunits. The sequence is that of Small ribosomal subunit protein uS2A from Vanderwaltozyma polyspora (strain ATCC 22028 / DSM 70294 / BCRC 21397 / CBS 2163 / NBRC 10782 / NRRL Y-8283 / UCD 57-17) (Kluyveromyces polysporus).